A 774-amino-acid chain; its full sequence is Pentatricopeptide repeat-containing protein At4g20770 (774 aa).

PPR repeat units follow at residues 5–39 (GNKY…GMKS), 40–70 (DTYL…MSVR), 71–101 (DVYS…MPER), 102–136 (DVVS…GFLP), 137–171 (SRFT…GLDK), 172–203 (NIFV…LSQP), 204–238 (NEVS…GVQV), 239–270 (DSVC…LGKQ), 283–313 (DLHL…MPEV), 314–348 (NVVS…GFQP), 349–379 (NEVT…IPQP), 380–414 (SVSA…NLKP), 415–449 (DKTT…EISK), 450–480 (NSHI…CINE), 482–516 (DIAC…AVLC), 518–552 (NETS…GYVS), 553–583 (DSFV…VLRK), 584–618 (NTVI…GEKP), 619–654 (DGIT…GIEP), and 655–685 (ELDH…TPYK). The type E motif stretch occupies residues 690 to 765 (LWEILLSSCR…TPGQSWTTYG (76 aa)).

The protein belongs to the PPR family. PCMP-E subfamily.

This Arabidopsis thaliana (Mouse-ear cress) protein is Pentatricopeptide repeat-containing protein At4g20770 (PCMP-E35).